An 89-amino-acid polypeptide reads, in one-letter code: Small ribosomal subunit protein uS19 (89 aa).

The protein belongs to the universal ribosomal protein uS19 family.

In terms of biological role, protein S19 forms a complex with S13 that binds strongly to the 16S ribosomal RNA. This chain is Small ribosomal subunit protein uS19, found in Azobacteroides pseudotrichonymphae genomovar. CFP2.